The sequence spans 428 residues: MSKTHLTEKKFSDFALHPKVIEALDNKGFSNCTPIQALTLPFTVEGRDVAGQAQTGTGKTLAFLASAFHYLLTHPAAEERQTNQPRALIMAPTRELAVQIYSDAEDLAQATGLKMGLAYGGDGYDKQLKILESGVDILIGTTGRLIDYTKQGHINLNAVQVVVLDEADRMYDLGFIKDIRWLFRRMPPVNERMNLLFSATLSYRVRELAFEQMNHAEYIEVEPLQKTGHRIREELFYPSNEEKMRLLQTLLEEEWPDRCIIFANTKHRCEDIWAHLAADGHRVGLLTGDVAQKKRLRILEEFSNGNIDILVATDVAARGLHIPLVTHVFNYDLPDDCEDYVHRIGRTGRAGESGHSISLACEEYALNLPAIEDYIQHSIPVSKYNSQALLKDLPAPKRRYRSRSGNHQRRNNLSHRNNTPRNNRKRSG.

The short motif at 9 to 37 (KKFSDFALHPKVIEALDNKGFSNCTPIQA) is the Q motif element. Positions 40–219 (LPFTVEGRDV…FEQMNHAEYI (180 aa)) constitute a Helicase ATP-binding domain. Position 53–60 (53–60 (AQTGTGKT)) interacts with ATP. Residues 165–168 (DEAD) carry the DEAD box motif. One can recognise a Helicase C-terminal domain in the interval 245–390 (RLLQTLLEEE…VSKYNSQALL (146 aa)). Residues 392–428 (DLPAPKRRYRSRSGNHQRRNNLSHRNNTPRNNRKRSG) form a disordered region. Basic residues predominate over residues 396–413 (PKRRYRSRSGNHQRRNNL).

It belongs to the DEAD box helicase family. RhlB subfamily. In terms of assembly, component of the RNA degradosome, which is a multiprotein complex involved in RNA processing and mRNA degradation.

The protein localises to the cytoplasm. The catalysed reaction is ATP + H2O = ADP + phosphate + H(+). Functionally, DEAD-box RNA helicase involved in RNA degradation. Has RNA-dependent ATPase activity and unwinds double-stranded RNA. The polypeptide is ATP-dependent RNA helicase RhlB (Photorhabdus laumondii subsp. laumondii (strain DSM 15139 / CIP 105565 / TT01) (Photorhabdus luminescens subsp. laumondii)).